The sequence spans 61 residues: Translational regulator CsrA (61 aa).

The protein belongs to the CsrA/RsmA family. In terms of assembly, homodimer; the beta-strands of each monomer intercalate to form a hydrophobic core, while the alpha-helices form wings that extend away from the core.

It is found in the cytoplasm. In terms of biological role, a key translational regulator that binds mRNA to regulate translation initiation and/or mRNA stability. Mediates global changes in gene expression, shifting from rapid growth to stress survival by linking envelope stress, the stringent response and the catabolite repression systems. Usually binds in the 5'-UTR; binding at or near the Shine-Dalgarno sequence prevents ribosome-binding, repressing translation, binding elsewhere in the 5'-UTR can activate translation and/or stabilize the mRNA. Its function is antagonized by small RNA(s). The chain is Translational regulator CsrA from Mannheimia succiniciproducens (strain KCTC 0769BP / MBEL55E).